The sequence spans 71 residues: Protein SlyX homolog (71 aa).

Belongs to the SlyX family.

The sequence is that of Protein SlyX homolog from Rhodopseudomonas palustris (strain HaA2).